The primary structure comprises 187 residues: UPF0301 protein ESA_00394 (187 aa).

Belongs to the UPF0301 (AlgH) family.

This Cronobacter sakazakii (strain ATCC BAA-894) (Enterobacter sakazakii) protein is UPF0301 protein ESA_00394.